Consider the following 918-residue polypeptide: Cell cycle and apoptosis regulator protein 2 (918 aa).

The interval 1 to 35 (MSQFKRQRINPLPGGRNFSGTASTSLLGPPPGLLT) is disordered. Residue T35 is modified to Phosphothreonine. Residue K112 is modified to N6-acetyllysine; by KAT8. An N6-methyllysine modification is found at K123. S124 bears the Phosphoserine mark. Disordered regions lie at residues 179–219 (NRFP…KPRH), 446–510 (KAAE…PAVI), and 568–637 (VSPP…ASED). R180 is subject to Omega-N-methylarginine. An N6-acetyllysine; by KAT8 modification is found at K215. Composition is skewed to low complexity over residues 447–468 (AAEA…EQAP) and 482–492 (AETPEATTQQE). Position 454 is a phosphothreonine; by ATM, ATR and CK2 (T454). T484 bears the Phosphothreonine mark. S569 is modified (phosphoserine). The span at 572 to 597 (EPEKEEAAKEEEAIKEEVVKEPKDEA) shows a compositional bias: basic and acidic residues. Residue K586 forms a Glycyl lysine isopeptide (Lys-Gly) (interchain with G-Cter in SUMO2 and SUMO3); alternate linkage. A Glycyl lysine isopeptide (Lys-Gly) (interchain with G-Cter in SUMO2); alternate cross-link involves residue K586. The interval 605–665 (ESEAPLKEDG…EEFAGAKLED (61 aa)) is interaction with MCC. A phosphoserine mark is found at S622, S670, S673, S676, S682, and S803. The tract at residues 699–918 (DCLLAFVFFD…VEKEEPAPSN (220 aa)) is interaction with NR1D1. The stretch at 824 to 904 (LENRIHTLEL…QLEIQRVVEK (81 aa)) forms a coiled coil. Phosphothreonine is present on T892.

In terms of assembly, component of the DBIRD complex. Interacts with ZNF326/ZIRD; the interaction is direct. Interacts (via N-terminus) with SIRT1, which inhibits the deacetylation of substrates. Interacts (via N-terminus) with SUV39H1; this interaction abolishes the interaction with SIRT1. Component of a nuclear receptor-mediated transcription complex composed of at least ZNF335, CCAR2 and EMSY; the complex stimulates the transcription of nuclear receptor target genes such as SOX9 and HOXA1. Within the complex interacts with EMSY and interacts with ZNF335 (via C-terminus). Components of this complex may associate with components of a histone methylation complex to form a complex at least composed of ZNF335, HCFC1, CCAR2, EMSY, MKI67, RBBP5, ASH2L and WDR5. Within this complex, interacts with ASH2L. Interacts with NR1D1. Interacts (via N-terminus) with ESR1 and ESR2. Interacts (via N-terminus) with HDAC3 (via C-terminus). Interacts with HDAC1 and MED2F. Interacts with MCC. Interacts (via N-terminus) with NR1H2 and NR1H3 in a ligand-independent manner. Interacts with CSNK2A1. Interacts (via N-terminus) with p53/TP53. Interacts (via N-terminus) with BRCA1 (via the BRCT domains). Interacts (via N-terminus) with CHEK2 (via protein kinase domain). Interacts with PSEM3. Interacts (via N-terminus) with PSIA3 and SENP1. The sumoylated form shows a preferential interaction with SIRT1 as compared to its unmodified form. Interacts with CECR2; may form part of the CERF-1 and/or CEF-5 ISWI chromatin remodeling complexes in embryonic stem cells. ATM/ATR-mediated phosphorylation at Thr-454 upon DNA damage promotes binding to SIRT1. Phosphorylation at Thr-454 promotes its sumoylation by switching the binding partner of CCAR2 from SENP1 to PIAS3. In terms of processing, acetylation at Lys-112 and Lys-215 by KAT8 prevents inhibitory binding to SIRT1 and increases its deacetylase activity. Post-translationally, genotoxic stress induces its sumoylation and sumoylation promotes the SIRT1-CCAR2 interaction which in turn inhibits SIRT1-mediated deacetylation of p53/TP53. Sumoylation leads to transcriptional activation of p53/TP53 by sequestering SIRT1 from p53/TP53. Desumoylated by SENP1.

Its subcellular location is the nucleus. It is found in the cytoplasm. The protein resides in the cytoskeleton. It localises to the spindle. Core component of the DBIRD complex, a multiprotein complex that acts at the interface between core mRNP particles and RNA polymerase II (RNAPII) and integrates transcript elongation with the regulation of alternative splicing: the DBIRD complex affects local transcript elongation rates and alternative splicing of a large set of exons embedded in (A + T)-rich DNA regions. Inhibits SIRT1 deacetylase activity leading to increasing levels of p53/TP53 acetylation and p53-mediated apoptosis. Inhibits SUV39H1 methyltransferase activity. Mediates ligand-dependent transcriptional activation by nuclear hormone receptors. Plays a critical role in maintaining genomic stability and cellular integrity following UV-induced genotoxic stress. Regulates the circadian expression of the core clock components NR1D1 and BMAL1. Enhances the transcriptional repressor activity of NR1D1 through stabilization of NR1D1 protein levels by preventing its ubiquitination and subsequent degradation. Represses the ligand-dependent transcriptional activation function of ESR2. Acts as a regulator of PCK1 expression and gluconeogenesis by a mechanism that involves, at least in part, both NR1D1 and SIRT1. Negatively regulates the deacetylase activity of HDAC3 and can alter its subcellular localization. Positively regulates the beta-catenin pathway (canonical Wnt signaling pathway) and is required for MCC-mediated repression of the beta-catenin pathway. Represses ligand-dependent transcriptional activation function of NR1H2 and NR1H3 and inhibits the interaction of SIRT1 with NR1H3. Plays an important role in tumor suppression through p53/TP53 regulation; stabilizes p53/TP53 by affecting its interaction with ubiquitin ligase MDM2. Represses the transcriptional activator activity of BRCA1. Inhibits SIRT1 in a CHEK2 and PSEM3-dependent manner and inhibits the activity of CHEK2 in vitro. The sequence is that of Cell cycle and apoptosis regulator protein 2 (CCAR2) from Pongo abelii (Sumatran orangutan).